A 652-amino-acid chain; its full sequence is Carboxypeptidase S1 homolog A (652 aa).

The N-terminal stretch at M1–A19 is a signal peptide. Cysteines 50 and 121 form a disulfide. N-linked (GlcNAc...) asparagine glycosylation is found at N77, N132, N161, N168, N184, and N202. S238 is a catalytic residue. 4 N-linked (GlcNAc...) asparagine glycosylation sites follow: N260, N299, N347, and N410. Disulfide bonds link C325–C361 and C332–C354. Residue D458 is part of the active site. Substrate is bound at residue C461. N474, N492, and N505 each carry an N-linked (GlcNAc...) asparagine glycan. H516 is a catalytic residue. Position 517 (E517) interacts with substrate. The N-linked (GlcNAc...) asparagine glycan is linked to N594. The segment at A608–A628 is disordered. The span at T618–A628 shows a compositional bias: low complexity. G629 carries the GPI-anchor amidated glycine lipid modification. A propeptide spans S630–L652 (removed in mature form).

The protein belongs to the peptidase S10 family.

It localises to the cell membrane. It catalyses the reaction Preferential release of a C-terminal arginine or lysine residue.. Functionally, extracellular serine carboxypeptidase that contributes to pathogenicity. This chain is Carboxypeptidase S1 homolog A (SCPA), found in Trichophyton verrucosum (strain HKI 0517).